Consider the following 1085-residue polypeptide: Solute carrier family 12 member 4 (1085 aa).

At 1–119 the chain is on the cytoplasmic side; the sequence is MPHFTVVPVD…RRAAKAPSMG (119 aa). A Phosphoserine modification is found at S24. Basic and acidic residues predominate over residues 28-46; it reads YGERAEREDPDGHGNHRES. The tract at residues 28–47 is disordered; that stretch reads YGERAEREDPDGHGNHRESS. 4 positions are modified to phosphoserine: S47, S59, S81, and S88. Residues 120–141 traverse the membrane as a discontinuously helical segment; it reads TLMGVYLPCLQNIFGVILFLRL. K(+) contacts are provided by N131 and I132. Topologically, residues 142 to 149 are extracellular; it reads TWMVGTAG. The chain crosses the membrane as a helical span at residues 150-172; the sequence is VLQALLIVLICCCCTLLTAISMS. Residues 173-196 lie on the Cytoplasmic side of the membrane; the sequence is AIATNGVVPAGGSYFMISRSLGPE. A helical transmembrane segment spans residues 197 to 225; it reads FGGAVGLCFYLGTTFAAAMYILGAIEILL. Y216 is a K(+) binding site. Topologically, residues 226–248 are extracellular; it reads TYIAPPAAIFYPSGTHDTSNATL. N245 carries N-linked (GlcNAc...) asparagine glycosylation. 2 consecutive transmembrane segments (helical) span residues 249–271 and 272–297; these read NNMR…VGVK and YVNK…GGIK. The Extracellular portion of the chain corresponds to 298–419; the sequence is SMFDPPVFPV…LYVVADIATS (122 aa). C308 and C323 form a disulfide bridge. N312, N331, and N347 each carry an N-linked (GlcNAc...) asparagine glycan. Residues C343 and C353 are joined by a disulfide bond. The helical transmembrane segment at 420-440 threads the bilayer; it reads FTVLVGIFFPSVTGIMAGSNR. 2 residues coordinate K(+): P429 and T432. G433, I434, and M435 together coordinate chloride. At 441 to 450 the chain is on the cytoplasmic side; the sequence is SGDLRDAQKS. The chain crosses the membrane as a helical span at residues 451 to 473; that stretch reads IPVGTILAIVTTSLVYFSSVVLF. Residues 474-504 lie on the Extracellular side of the membrane; sequence GACIEGVVLRDKYGDGVSRNLVVGTLAWPSP. Residues 505-531 form a helical membrane-spanning segment; it reads WVIVVGSFFSTCGAGLQSLTGAPRLLQ. At 532–554 the chain is on the cytoplasmic side; sequence AIAKDNIIPFLRVFGHGKANGEP. The next 2 helical transmembrane spans lie at 555-575 and 576-598; these read TWAL…ASLD and MVAP…ACAV. Y589 provides a ligand contact to chloride. At 599 to 612 the chain is on the cytoplasmic side; that stretch reads QTLLRTPNWRPRFK. Helical transmembrane passes span 613–635 and 636–651; these read YYHW…VSSW and YYAL…IYKY. Residues 652 to 1085 are Cytoplasmic-facing; sequence IEYQGAEKEW…GGREVITIYS (434 aa). A scissor helix region spans residues 665 to 681; sequence IRGLSLSAARYALLRLE. ATP is bound by residues L697, K699, K707, Y708, and V730. At S734 the chain carries Phosphoserine. ATP contacts are provided by G794, W795, and Y797. Residues S916 and S967 each carry the phosphoserine modification. T983 carries the post-translational modification Phosphothreonine. At S1050 the chain carries Phosphoserine.

The protein belongs to the SLC12A transporter family. K/Cl co-transporter subfamily. In terms of assembly, homodimer; adopts a domain-swap conformation at the scissor helices connecting the transmembrane domain and C-terminal domain. Heterodimer with other K-Cl cotransporters. In terms of processing, N-glycosylated. Phosphorylated, phosphorylation may regulate transporter activity.

It is found in the cell membrane. The enzyme catalyses K(+)(in) + chloride(in) = K(+)(out) + chloride(out). Its activity is regulated as follows. Inhibited by WNK3. Its function is as follows. Mediates electroneutral potassium-chloride cotransport when activated by cell swelling. May contribute to cell volume homeostasis in single cells. May be involved in the regulation of basolateral Cl(-) exit in NaCl absorbing epithelia. The sequence is that of Solute carrier family 12 member 4 (SLC12A4) from Oryctolagus cuniculus (Rabbit).